Here is a 92-residue protein sequence, read N- to C-terminus: Small ribosomal subunit protein uS19 (92 aa).

It belongs to the universal ribosomal protein uS19 family.

Its function is as follows. Protein S19 forms a complex with S13 that binds strongly to the 16S ribosomal RNA. This is Small ribosomal subunit protein uS19 from Geobacillus sp. (strain WCH70).